Consider the following 130-residue polypeptide: Small ribosomal subunit protein eS6 (130 aa).

It belongs to the eukaryotic ribosomal protein eS6 family.

The protein is Small ribosomal subunit protein eS6 of Methanosphaera stadtmanae (strain ATCC 43021 / DSM 3091 / JCM 11832 / MCB-3).